The following is an 81-amino-acid chain: ATP synthase subunit C, plastid (81 aa).

2 helical membrane passes run proline 3 to glycine 23 and glutamate 61 to isoleucine 81.

The protein belongs to the ATPase C chain family. F-type ATPases have 2 components, F(1) - the catalytic core - and F(0) - the membrane proton channel. F(1) has five subunits: alpha(3), beta(3), gamma(1), delta(1), epsilon(1). F(0) has four main subunits: a(1), b(1), b'(1) and c(10-14). The alpha and beta chains form an alternating ring which encloses part of the gamma chain. F(1) is attached to F(0) by a central stalk formed by the gamma and epsilon chains, while a peripheral stalk is formed by the delta, b and b' chains.

It is found in the plastid membrane. Its function is as follows. F(1)F(0) ATP synthase produces ATP from ADP in the presence of a proton or sodium gradient. F-type ATPases consist of two structural domains, F(1) containing the extramembraneous catalytic core and F(0) containing the membrane proton channel, linked together by a central stalk and a peripheral stalk. During catalysis, ATP synthesis in the catalytic domain of F(1) is coupled via a rotary mechanism of the central stalk subunits to proton translocation. In terms of biological role, key component of the F(0) channel; it plays a direct role in translocation across the membrane. A homomeric c-ring of between 10-14 subunits forms the central stalk rotor element with the F(1) delta and epsilon subunits. The protein is ATP synthase subunit C, plastid of Aneura mirabilis (Parasitic liverwort).